The chain runs to 504 residues: Trifunctional (S)-stylopine synthase/(S)-nandinine synthase/(S)-canadine synthase (504 aa).

The helical transmembrane segment at 16–36 (SSTTTTTTILLSLLFTIFIIL) threads the bilayer. Heme is bound at residue cysteine 448.

Belongs to the cytochrome P450 family. Heme serves as cofactor. Expressed in roots and at lower levels in stems, leaves and plantlets.

Its subcellular location is the endoplasmic reticulum membrane. The enzyme catalyses (S)-cheilanthifoline + reduced [NADPH--hemoprotein reductase] + O2 = (S)-stylopine + oxidized [NADPH--hemoprotein reductase] + 2 H2O + H(+). The catalysed reaction is (S)-tetrahydrocolumbamine + reduced [NADPH--hemoprotein reductase] + O2 = (S)-canadine + oxidized [NADPH--hemoprotein reductase] + 2 H2O + H(+). It catalyses the reaction (S)-scoulerine + reduced [NADPH--hemoprotein reductase] + O2 = (S)-nandinine + oxidized [NADPH--hemoprotein reductase] + 2 H2O + H(+). Functionally, methylenedioxy bridge-forming cytochrome P450 involved in the biosynthesis of isoquinoline alkaloids. Converts (S)-cheilanthifoline to (S)-stylopine, (S)-scoulerine to (S)-nandinine and (S)-tetrahydrocolumbamine to (S)-canadine. Can be involved in both sanguinarine and berberine biosynthesis. Catalyzes an oxidative reaction that does not incorporate oxygen into the product. This Argemone mexicana (Mexican prickly poppy) protein is Trifunctional (S)-stylopine synthase/(S)-nandinine synthase/(S)-canadine synthase.